The primary structure comprises 255 residues: Flap endonuclease Xni (255 aa).

Asp-105 provides a ligand contact to Mg(2+). The 5'-3' exonuclease domain occupies 163–253; sequence QYQMLDFIAL…NLKQFRINPI (91 aa). Residues Leu-172, Ala-173, Pro-181, Ile-183, and Ile-186 each contribute to the K(+) site. Residues 185 to 190 are interaction with DNA; sequence GIGPKS.

Belongs to the Xni family. Mg(2+) serves as cofactor. K(+) is required as a cofactor.

In terms of biological role, has flap endonuclease activity. During DNA replication, flap endonucleases cleave the 5'-overhanging flap structure that is generated by displacement synthesis when DNA polymerase encounters the 5'-end of a downstream Okazaki fragment. The sequence is that of Flap endonuclease Xni from Shewanella frigidimarina (strain NCIMB 400).